Reading from the N-terminus, the 224-residue chain is Urease accessory protein UreF (224 aa).

It belongs to the UreF family. As to quaternary structure, ureD, UreF and UreG form a complex that acts as a GTP-hydrolysis-dependent molecular chaperone, activating the urease apoprotein by helping to assemble the nickel containing metallocenter of UreC. The UreE protein probably delivers the nickel.

It localises to the cytoplasm. Functionally, required for maturation of urease via the functional incorporation of the urease nickel metallocenter. In Klebsiella pneumoniae subsp. pneumoniae (strain ATCC 700721 / MGH 78578), this protein is Urease accessory protein UreF.